Reading from the N-terminus, the 201-residue chain is dITP/XTP pyrophosphatase (201 aa).

8 to 13 (TTNENK) serves as a coordination point for substrate. Aspartate 68 (proton acceptor) is an active-site residue. A Mg(2+)-binding site is contributed by aspartate 68. Residues serine 69, 155–158 (FGYD), lysine 177, and 182–183 (HR) contribute to the substrate site.

This sequence belongs to the HAM1 NTPase family. Homodimer. It depends on Mg(2+) as a cofactor.

It carries out the reaction XTP + H2O = XMP + diphosphate + H(+). The catalysed reaction is dITP + H2O = dIMP + diphosphate + H(+). The enzyme catalyses ITP + H2O = IMP + diphosphate + H(+). In terms of biological role, pyrophosphatase that catalyzes the hydrolysis of nucleoside triphosphates to their monophosphate derivatives, with a high preference for the non-canonical purine nucleotides XTP (xanthosine triphosphate), dITP (deoxyinosine triphosphate) and ITP. Seems to function as a house-cleaning enzyme that removes non-canonical purine nucleotides from the nucleotide pool, thus preventing their incorporation into DNA/RNA and avoiding chromosomal lesions. This Borrelia garinii subsp. bavariensis (strain ATCC BAA-2496 / DSM 23469 / PBi) (Borreliella bavariensis) protein is dITP/XTP pyrophosphatase.